The sequence spans 328 residues: MSQRQVAYVFDLNKCIGCHTCTMACKQLWTNRDGREYMYWNNVETRPGKGYPKNWEGKGGGFDQEGKLKTNGIIPIMADYGGRIGDFNLNEVLLEGKADQVVPHEKATWGPNWDEDEGKGEFPNNHSFYLPRICNHCSNPACLAACPTKAIYKRPEDGIVVVDQTRCRGYRYCVKACPYGKMYFNLQKGKSEKCIGCYPRVEKGEAPACVKQCSGRIRFWGYRDDKNGPIYKLVEQWKVALPLHAEYGTEPNVFYVPPMNTTPPPFEEDGRLGDKPRIPIEDLEALFGPGVKQALATLGGEMAKRRKAQASELTDILIGFTNKDRYGV.

3 4Fe-4S ferredoxin-type domains span residues 6 to 35 (VAYV…RDGR), 125 to 156 (NHSF…KRPE), and 158 to 187 (GIVV…FNLQ). Residues cysteine 15, cysteine 18, cysteine 21, cysteine 25, cysteine 134, cysteine 137, and cysteine 142 each contribute to the [4Fe-4S] cluster site. Positions 146, 167, and 173 each coordinate [3Fe-4S] cluster. Residues cysteine 177, cysteine 194, cysteine 197, cysteine 209, and cysteine 213 each contribute to the [4Fe-4S] cluster site.

Heterotrimer of alpha, beta and gamma subunits. [3Fe-4S] cluster serves as cofactor. It depends on [4Fe-4S] cluster as a cofactor.

The protein resides in the periplasm. Functionally, electron transfer subunit of the terminal reductase during anaerobic growth on chlorate. The protein is Chlorate reductase subunit beta (clrB) of Ideonella dechloratans.